Consider the following 89-residue polypeptide: Phosphocarrier protein HPr (89 aa).

The region spanning A2 to G89 is the HPr domain. H15 serves as the catalytic Pros-phosphohistidine intermediate. S46 bears the Phosphoserine; by HPrK/P mark.

It belongs to the HPr family.

Its subcellular location is the cytoplasm. With respect to regulation, phosphorylation on Ser-46 inhibits the phosphoryl transfer from enzyme I to HPr. In terms of biological role, general (non sugar-specific) component of the phosphoenolpyruvate-dependent sugar phosphotransferase system (sugar PTS). This major carbohydrate active-transport system catalyzes the phosphorylation of incoming sugar substrates concomitantly with their translocation across the cell membrane. The phosphoryl group from phosphoenolpyruvate (PEP) is transferred to the phosphoryl carrier protein HPr by enzyme I. Phospho-HPr then transfers it to the PTS EIIA domain. Its function is as follows. P-Ser-HPr interacts with the catabolite control protein A (CcpA), forming a complex that binds to DNA at the catabolite response elements cre, operator sites preceding a large number of catabolite-regulated genes. Thus, P-Ser-HPr is a corepressor in carbon catabolite repression (CCR), a mechanism that allows bacteria to coordinate and optimize the utilization of available carbon sources. P-Ser-HPr also plays a role in inducer exclusion, in which it probably interacts with several non-PTS permeases and inhibits their transport activity. The chain is Phosphocarrier protein HPr (ptsH) from Mycoplasma capricolum subsp. capricolum (strain California kid / ATCC 27343 / NCTC 10154).